The sequence spans 219 residues: Phosphatidylserine decarboxylase proenzyme (219 aa).

Catalysis depends on Ser182, which acts as the Schiff-base intermediate with substrate; via pyruvic acid. Position 182 is a pyruvic acid (Ser); by autocatalysis (Ser182).

It belongs to the phosphatidylserine decarboxylase family. PSD-A subfamily. In terms of assembly, heterodimer of a large membrane-associated beta subunit and a small pyruvoyl-containing alpha subunit. Requires pyruvate as cofactor. Is synthesized initially as an inactive proenzyme. Formation of the active enzyme involves a self-maturation process in which the active site pyruvoyl group is generated from an internal serine residue via an autocatalytic post-translational modification. Two non-identical subunits are generated from the proenzyme in this reaction, and the pyruvate is formed at the N-terminus of the alpha chain, which is derived from the carboxyl end of the proenzyme. The post-translation cleavage follows an unusual pathway, termed non-hydrolytic serinolysis, in which the side chain hydroxyl group of the serine supplies its oxygen atom to form the C-terminus of the beta chain, while the remainder of the serine residue undergoes an oxidative deamination to produce ammonia and the pyruvoyl prosthetic group on the alpha chain.

It is found in the cell membrane. The catalysed reaction is a 1,2-diacyl-sn-glycero-3-phospho-L-serine + H(+) = a 1,2-diacyl-sn-glycero-3-phosphoethanolamine + CO2. It functions in the pathway phospholipid metabolism; phosphatidylethanolamine biosynthesis; phosphatidylethanolamine from CDP-diacylglycerol: step 2/2. Catalyzes the formation of phosphatidylethanolamine (PtdEtn) from phosphatidylserine (PtdSer). The chain is Phosphatidylserine decarboxylase proenzyme from Chlorobium phaeovibrioides (strain DSM 265 / 1930) (Prosthecochloris vibrioformis (strain DSM 265)).